A 383-amino-acid chain; its full sequence is Galactokinase (383 aa).

34–37 (EHTD) provides a ligand contact to substrate. 124–130 (GAGLSSS) contacts ATP. S130 and E162 together coordinate Mg(2+). The active-site Proton acceptor is D174. A substrate-binding site is contributed by Y223.

This sequence belongs to the GHMP kinase family. GalK subfamily.

It localises to the cytoplasm. The catalysed reaction is alpha-D-galactose + ATP = alpha-D-galactose 1-phosphate + ADP + H(+). It participates in carbohydrate metabolism; galactose metabolism. Its function is as follows. Catalyzes the transfer of the gamma-phosphate of ATP to D-galactose to form alpha-D-galactose-1-phosphate (Gal-1-P). The protein is Galactokinase of Yersinia enterocolitica serotype O:8 / biotype 1B (strain NCTC 13174 / 8081).